The primary structure comprises 75 residues: Putative DNA-directed RNA polymerase subunit omega (75 aa).

This sequence belongs to the RNA polymerase subunit omega family.

Its subcellular location is the plastid. It localises to the chloroplast. The catalysed reaction is RNA(n) + a ribonucleoside 5'-triphosphate = RNA(n+1) + diphosphate. Functionally, may be involved in RNA polymerase activity. The polypeptide is Putative DNA-directed RNA polymerase subunit omega (Pyropia yezoensis (Susabi-nori)).